The chain runs to 805 residues: Sucrose synthase (805 aa).

Residues 275–752 (MVFNVVILSP…GLQRIEEKYT (478 aa)) are GT-B glycosyltransferase.

This sequence belongs to the glycosyltransferase 1 family. Plant sucrose synthase subfamily.

It catalyses the reaction an NDP-alpha-D-glucose + D-fructose = a ribonucleoside 5'-diphosphate + sucrose + H(+). Functionally, sucrose-cleaving enzyme that provides UDP-glucose and fructose for various metabolic pathways. The chain is Sucrose synthase from Medicago sativa (Alfalfa).